We begin with the raw amino-acid sequence, 282 residues long: Homeobox-leucine zipper protein HAT1 (282 aa).

The interval 71 to 134 (LEEETGVSSP…EEDYGGETCR (64 aa)) is disordered. Low complexity predominate over residues 76-89 (GVSSPNSTISSTVS). A DNA-binding region (homeobox) is located at residues 132–191 (TCRKKLRLSKDQSAVLEDTFKEHNTLNPKQKLALAKKLGLTARQVEVWFQNRRARTKLKQ). Residues 199-220 (LKRCVEKLTEENRRLEKEAAEL) are leucine-zipper.

This sequence belongs to the HD-ZIP homeobox family. Class II subfamily. In terms of assembly, interacts with BZIP30.

It is found in the nucleus. In terms of biological role, probable transcription factor. In Arabidopsis thaliana (Mouse-ear cress), this protein is Homeobox-leucine zipper protein HAT1 (HAT1).